Here is a 270-residue protein sequence, read N- to C-terminus: Tetraspanin-17 (270 aa).

The Cytoplasmic portion of the chain corresponds to 1-19 (MPGKHQHFQEPEVGCCGKY). The chain crosses the membrane as a helical span at residues 20–40 (FLFGFNIVFWVLGALFLAIGL). Residues 41–63 (WAWSEKGVLSNISALTDLGGLDP) lie on the Extracellular side of the membrane. An N-linked (GlcNAc...) asparagine glycan is attached at Asn51. The chain crosses the membrane as a helical span at residues 64–84 (VWLFVVVGGVMSVLGFAGCIG). Residues 85–94 (ALRENTFLLK) are Cytoplasmic-facing. The helical transmembrane segment at 95–115 (FFSVFLGLIFFLELATGILAF) threads the bilayer. Residues 116–234 (VFKDWIRDQL…GQFEKWLQDN (119 aa)) are Extracellular-facing. Intrachain disulfides connect Cys155–Cys223, Cys156–Cys188, Cys172–Cys182, and Cys189–Cys202. The N-linked (GlcNAc...) asparagine glycan is linked to Asn171. The chain crosses the membrane as a helical span at residues 235–255 (LIVVAGVFVGIALLQIFGICL). Residues 256-270 (AQNLVSDIKAVKANW) are Cytoplasmic-facing.

Belongs to the tetraspanin (TM4SF) family. As to quaternary structure, interacts with ADAM10; the interaction influences ADAM10 substrate specificity, endocytosis and turnover.

Its subcellular location is the cell membrane. Its function is as follows. Part of TspanC8 subgroup, composed of 6 members that interact with the transmembrane metalloprotease ADAM10. This interaction is required for ADAM10 exit from the endoplasmic reticulum and for enzymatic maturation and trafficking to the cell surface as well as substrate specificity. Different TspanC8/ADAM10 complexes have distinct substrates. Seems to regulate VE-cadherin expression in endothelial cells probably through interaction with ADAM10, promoting leukocyte transmigration. The chain is Tetraspanin-17 (TSPAN17) from Bos taurus (Bovine).